Consider the following 265-residue polypeptide: Mlc titration factor A (265 aa).

Positions 111, 148, 152, and 211 each coordinate Zn(2+).

This sequence belongs to the MtfA family. Interacts with Mlc with high affinity. Zn(2+) is required as a cofactor.

Its subcellular location is the cytoplasm. With respect to regulation, proteolytic activity is stimulated by interaction with Mlc. Addition of the chelators EDTA or phenanthroline significantly reduces the peptidase activity, whereas the addition of other protease inhibitors has much less effect. In terms of biological role, involved in the modulation of the activity of the glucose-phosphotransferase system (glucose-PTS). Interacts with the transcriptional repressor Mlc, preventing its interaction with DNA and leading to the modulation of expression of genes regulated by Mlc, including ptsG, which encodes the PTS system glucose-specific EIICB component. Functionally, shows zinc-dependent metallopeptidase activity. In vitro, can cleave several artificial substrates. The greatest activity and specificity is observed for L-alanine fused to 4-nitroanilide (L-alanine-pNA). Shows significantly lower activity towards L-arginine-pNA, L-proline-pNA, hippuryl-L-phenylalanine and hippuryl-L-arginine, and cannot use FTC-casein. Mlc does not appear to be a biologically relevant peptidase substrate. Biologically relevant targets may have a function in growth transition under changing environmental conditions. The chain is Mlc titration factor A from Escherichia coli (strain K12).